The chain runs to 756 residues: 5-methyltetrahydropteroyltriglutamate--homocysteine methyltransferase (756 aa).

5-methyltetrahydropteroyltri-L-glutamate is bound by residues R20–K23 and K114. L-homocysteine-binding positions include I433 to S435 and E486. L-methionine is bound by residues I433–S435 and E486. 5-methyltetrahydropteroyltri-L-glutamate contacts are provided by residues R517 to C518 and W563. Position 601 (D601) interacts with L-homocysteine. D601 provides a ligand contact to L-methionine. Residue E607 participates in 5-methyltetrahydropteroyltri-L-glutamate binding. Residues H643, C645, and E667 each contribute to the Zn(2+) site. H696 acts as the Proton donor in catalysis. C728 is a Zn(2+) binding site.

This sequence belongs to the vitamin-B12 independent methionine synthase family. It depends on Zn(2+) as a cofactor.

The enzyme catalyses 5-methyltetrahydropteroyltri-L-glutamate + L-homocysteine = tetrahydropteroyltri-L-glutamate + L-methionine. Its pathway is amino-acid biosynthesis; L-methionine biosynthesis via de novo pathway; L-methionine from L-homocysteine (MetE route): step 1/1. Its function is as follows. Catalyzes the transfer of a methyl group from 5-methyltetrahydrofolate to homocysteine resulting in methionine formation. This is 5-methyltetrahydropteroyltriglutamate--homocysteine methyltransferase from Mycolicibacterium paratuberculosis (strain ATCC BAA-968 / K-10) (Mycobacterium paratuberculosis).